We begin with the raw amino-acid sequence, 112 residues long: UPF0102 protein CHAB381_0216 (112 aa).

Belongs to the UPF0102 family.

The protein is UPF0102 protein CHAB381_0216 of Campylobacter hominis (strain ATCC BAA-381 / DSM 21671 / CCUG 45161 / LMG 19568 / NCTC 13146 / CH001A).